A 347-amino-acid polypeptide reads, in one-letter code: Holliday junction branch migration complex subunit RuvB (347 aa).

The large ATPase domain (RuvB-L) stretch occupies residues 1–183; it reads MTPPSRIVTP…FGIPIRLNFY (183 aa). ATP is bound by residues Leu-22, Arg-23, Gly-64, Lys-67, Thr-68, Thr-69, 130-132, Arg-173, Tyr-183, and Arg-220; that span reads EDF. Thr-68 is a Mg(2+) binding site. Residues 184-254 form a small ATPAse domain (RuvB-S) region; the sequence is TVEELEGIVS…IADHALSALE (71 aa). A head domain (RuvB-H) region spans residues 257–347; the sequence is AAGLDAMDRR…QFGLFGGDEE (91 aa). Residues Arg-293, Arg-312, and Arg-317 each coordinate DNA.

It belongs to the RuvB family. Homohexamer. Forms an RuvA(8)-RuvB(12)-Holliday junction (HJ) complex. HJ DNA is sandwiched between 2 RuvA tetramers; dsDNA enters through RuvA and exits via RuvB. An RuvB hexamer assembles on each DNA strand where it exits the tetramer. Each RuvB hexamer is contacted by two RuvA subunits (via domain III) on 2 adjacent RuvB subunits; this complex drives branch migration. In the full resolvosome a probable DNA-RuvA(4)-RuvB(12)-RuvC(2) complex forms which resolves the HJ.

The protein localises to the cytoplasm. It carries out the reaction ATP + H2O = ADP + phosphate + H(+). The RuvA-RuvB-RuvC complex processes Holliday junction (HJ) DNA during genetic recombination and DNA repair, while the RuvA-RuvB complex plays an important role in the rescue of blocked DNA replication forks via replication fork reversal (RFR). RuvA specifically binds to HJ cruciform DNA, conferring on it an open structure. The RuvB hexamer acts as an ATP-dependent pump, pulling dsDNA into and through the RuvAB complex. RuvB forms 2 homohexamers on either side of HJ DNA bound by 1 or 2 RuvA tetramers; 4 subunits per hexamer contact DNA at a time. Coordinated motions by a converter formed by DNA-disengaged RuvB subunits stimulates ATP hydrolysis and nucleotide exchange. Immobilization of the converter enables RuvB to convert the ATP-contained energy into a lever motion, pulling 2 nucleotides of DNA out of the RuvA tetramer per ATP hydrolyzed, thus driving DNA branch migration. The RuvB motors rotate together with the DNA substrate, which together with the progressing nucleotide cycle form the mechanistic basis for DNA recombination by continuous HJ branch migration. Branch migration allows RuvC to scan DNA until it finds its consensus sequence, where it cleaves and resolves cruciform DNA. In Rhodopseudomonas palustris (strain BisA53), this protein is Holliday junction branch migration complex subunit RuvB.